We begin with the raw amino-acid sequence, 253 residues long: Ribosomal RNA small subunit methyltransferase I (253 aa).

Positions 230–246 are enriched in basic and acidic residues; that stretch reads RKEQRSQRSFSKGDKKP. Residues 230–253 form a disordered region; it reads RKEQRSQRSFSKGDKKPSFKRFKK.

This sequence belongs to the methyltransferase superfamily. RsmI family.

Its subcellular location is the cytoplasm. It carries out the reaction cytidine(1402) in 16S rRNA + S-adenosyl-L-methionine = 2'-O-methylcytidine(1402) in 16S rRNA + S-adenosyl-L-homocysteine + H(+). Its function is as follows. Catalyzes the 2'-O-methylation of the ribose of cytidine 1402 (C1402) in 16S rRNA. This Leptospira borgpetersenii serovar Hardjo-bovis (strain L550) protein is Ribosomal RNA small subunit methyltransferase I.